The chain runs to 500 residues: L-arabinose isomerase (500 aa).

Mn(2+) is bound by residues E306, E333, H349, and H448.

The protein belongs to the arabinose isomerase family. Mn(2+) serves as cofactor.

It catalyses the reaction beta-L-arabinopyranose = L-ribulose. It participates in carbohydrate degradation; L-arabinose degradation via L-ribulose; D-xylulose 5-phosphate from L-arabinose (bacterial route): step 1/3. In terms of biological role, catalyzes the conversion of L-arabinose to L-ribulose. This is L-arabinose isomerase from Koribacter versatilis (strain Ellin345).